The following is a 264-amino-acid chain: ATP synthase subunit a (264 aa).

Transmembrane regions (helical) follow at residues 29–49, 87–107, 134–154, 177–197, 208–228, and 235–255; these read TWHI…LWIF, NALI…MNFM, DLNI…YYSI, IPVN…SLAL, LIFI…SLGV, and LIFH…LTIV.

The protein belongs to the ATPase A chain family. F-type ATPases have 2 components, CF(1) - the catalytic core - and CF(0) - the membrane proton channel. CF(1) has five subunits: alpha(3), beta(3), gamma(1), delta(1), epsilon(1). CF(0) has three main subunits: a(1), b(2) and c(9-12). The alpha and beta chains form an alternating ring which encloses part of the gamma chain. CF(1) is attached to CF(0) by a central stalk formed by the gamma and epsilon chains, while a peripheral stalk is formed by the delta and b chains.

Its subcellular location is the cell inner membrane. In terms of biological role, key component of the proton channel; it plays a direct role in the translocation of protons across the membrane. This is ATP synthase subunit a from Shewanella amazonensis (strain ATCC BAA-1098 / SB2B).